The sequence spans 1097 residues: Chitin synthase 2 (1097 aa).

A disordered region spans residues 1-46 (MAGYGHSTAGGFGSGSGSGPPGPQYMLPQYDEGDDPDADATPAGQG). The Extracellular portion of the chain corresponds to 1–748 (MAGYGHSTAG…HVEFLYHLLQ (748 aa)). Positions 8–19 (TAGGFGSGSGSG) are enriched in gly residues. A glycan (N-linked (GlcNAc...) asparagine) is linked at Asn-55. 2 disordered regions span residues 148–217 (SGHG…YPRY) and 259–322 (SSQI…RPPQ). A compositionally biased stretch (polar residues) spans 284–296 (STTYSSNTGTSAS). The span at 299 to 313 (DKFEHYGPIPEEGKH) shows a compositional bias: basic and acidic residues. N-linked (GlcNAc...) asparagine glycosylation is found at Asn-416 and Asn-424. A helical membrane pass occupies residues 749 to 769 (LLFTYFSLANFYLAFYFIAGG). Over 770–786 (LADPHVDPFNSDGHVAR) the chain is Cytoplasmic. The helical transmembrane segment at 787–807 (IIFNILRYVCVLLICTQFILS) threads the bilayer. Residues 808–821 (LGNRPQGAKRMYLA) lie on the Extracellular side of the membrane. Residues 822–842 (SMIIYAVIMVYTTFATIFIVV) traverse the membrane as a helical segment. Residues 843–865 (RQIQPSQKSDDKPDLELGNNVFT) are Cytoplasmic-facing. The helical transmembrane segment at 866–886 (NLIVSVASTLGLYFVMSFLYL) threads the bilayer. At 887-894 (DPWHMFTS) the chain is on the extracellular side. Residues 895 to 915 (AIQYFVLLPSYICTLQIYAFC) form a helical membrane-spanning segment. At 916–993 (NTHDVTWGTK…QDYYKSVRTY (78 aa)) the chain is on the cytoplasmic side. The chain crosses the membrane as a helical span at residues 994 to 1014 (MVVSWMVANATLAMAVSEAYG). Residues 1015-1025 (DSEIGDNFYLR) are Extracellular-facing. A helical membrane pass occupies residues 1026 to 1046 (FILWAVAALALFRALGSTTFA). The Cytoplasmic portion of the chain corresponds to 1047–1097 (AINLVSALVEGRVRLRLNMKGFRWIKEKWGDADVKGKFEGLGDRARGLARR).

The protein belongs to the chitin synthase family.

The protein localises to the cell membrane. It carries out the reaction [(1-&gt;4)-N-acetyl-beta-D-glucosaminyl](n) + UDP-N-acetyl-alpha-D-glucosamine = [(1-&gt;4)-N-acetyl-beta-D-glucosaminyl](n+1) + UDP + H(+). Its function is as follows. Polymerizes chitin, a structural polymer of the cell wall and septum, by transferring the sugar moiety of UDP-GlcNAc to the non-reducing end of the growing chitin polymer. This Neurospora crassa (strain ATCC 24698 / 74-OR23-1A / CBS 708.71 / DSM 1257 / FGSC 987) protein is Chitin synthase 2 (chs-2).